The primary structure comprises 203 residues: Peptidoglycan-recognition protein SA (203 aa).

The N-terminal stretch at 1-26 (MQPVRFGSPWIMAIGLVLLLLAFVSA) is a signal peptide. 2 cysteine pairs are disulfide-bonded: Cys-37–Cys-160 and Cys-74–Cys-80. The N-acetylmuramoyl-L-alanine amidase domain maps to 59–186 (RPIRYVVIHH…SQVISTQSPG (128 aa)). Peptidoglycan binding regions lie at residues 87–90 (MQAY) and 97–102 (FNDISY).

Belongs to the N-acetylmuramoyl-L-alanine amidase 2 family. As to expression, in larvae, it is expressed in fat body. Also expressed in uninduced hemocytes and mbn-2 cells.

It localises to the secreted. The enzyme catalyses N-acetyl-D-glucosaminyl-N-acetylmuramoyl-L-alanyl-meso-2,6-diaminoheptanedioyl-D-alanine + H2O = N-acetyl-D-glucosaminyl-N-acetylmuramoyl-L-alanyl-meso-2,6-diaminoheptanedioate + D-alanine. In terms of biological role, peptidoglycan-recognition protein that plays a key role in innate immunity by binding to peptidoglycans (PGN) of Gram-positive bacteria and activating the Toll pathway upstream of spz activating enzyme SPE. Has no activity against Gram-negative bacteria and fungi. Shows some partial redundancy with PRPGP-SD in Gram-positive bacteria recognition. May act by forming a complex with GNBP1 that activates the proteolytic cleavage of Spatzle and the subsequent activation of Toll pathway. Binds to diaminopimelic acid-type tetrapeptide PGN (DAP-type PGN) and lysine-type PGN (Lys-type PGN). Has some L,D-carboxypeptidase activity for DAP-type PGN, which are specific to prokaryotes, but not for Lys-type PGN. This chain is Peptidoglycan-recognition protein SA (PGRP-SA), found in Drosophila melanogaster (Fruit fly).